The following is a 155-amino-acid chain: Cytochrome c-type biogenesis protein CcmE (155 aa).

At 1-8 the chain is on the cytoplasmic side; the sequence is MNPRRKKR. A helical; Signal-anchor for type II membrane protein membrane pass occupies residues 9 to 29; the sequence is LLITSLLAVALSLAVGLVLFA. The Periplasmic portion of the chain corresponds to 30–155; sequence LQQNIDLFYT…GMDNFKANNK (126 aa). Residues His-131 and Tyr-135 each coordinate heme.

This sequence belongs to the CcmE/CycJ family.

The protein localises to the cell inner membrane. In terms of biological role, heme chaperone required for the biogenesis of c-type cytochromes. Transiently binds heme delivered by CcmC and transfers the heme to apo-cytochromes in a process facilitated by CcmF and CcmH. The sequence is that of Cytochrome c-type biogenesis protein CcmE from Psychromonas ingrahamii (strain DSM 17664 / CCUG 51855 / 37).